Here is a 129-residue protein sequence, read N- to C-terminus: UPF0344 protein SAB0838 (129 aa).

A run of 4 helical transmembrane segments spans residues 1 to 21 (MLHL…ATYL), 36 to 56 (LHMV…WILI), 67 to 87 (MLLT…EVSI), and 99 to 119 (MFWI…ILPL).

It belongs to the UPF0344 family.

The protein resides in the cell membrane. The chain is UPF0344 protein SAB0838 from Staphylococcus aureus (strain bovine RF122 / ET3-1).